The following is a 194-amino-acid chain: 2,4-dinitrotoluene dioxygenase system, small oxygenase component (194 aa).

This sequence belongs to the bacterial ring-hydroxylating dioxygenase beta subunit family. As to quaternary structure, the 2,4-dinitrotoluene dioxygenase (DNTDO) multicomponent enzyme system is composed of an electron transfer component and a dioxygenase component (iron sulfur protein (ISP)). The electron transfer component is composed of a ferredoxin reductase (DntAa) and a ferredoxin (DntAb), and the dioxygenase component is formed of a large alpha subunit (DntAc) and a small beta subunit (DntAd).

Functionally, component of the 2,4-dinitrotoluene dioxygenase (DNTDO) multicomponent enzyme system which catalyzes the incorporation of both atoms of molecular oxygen into 2,4-dinitrotoluene (DNT) to form 4-methyl-5-nitrocatechol (MNC) and nitrite. The beta subunit seems to have a structural role in the holoenzyme. Also able to convert naphthalene to cis-(1R,2S)-dihydroxy-1,2-dihydronaphthalene. This Burkholderia sp. (strain RASC) protein is 2,4-dinitrotoluene dioxygenase system, small oxygenase component.